A 353-amino-acid chain; its full sequence is Alanine racemase (353 aa).

Lys-33 acts as the Proton acceptor; specific for D-alanine in catalysis. The residue at position 33 (Lys-33) is an N6-(pyridoxal phosphate)lysine. Arg-129 contacts substrate. Tyr-250 (proton acceptor; specific for L-alanine) is an active-site residue. A substrate-binding site is contributed by Met-298.

This sequence belongs to the alanine racemase family. Pyridoxal 5'-phosphate is required as a cofactor.

The catalysed reaction is L-alanine = D-alanine. The protein operates within amino-acid biosynthesis; D-alanine biosynthesis; D-alanine from L-alanine: step 1/1. Catalyzes the interconversion of L-alanine and D-alanine. May also act on other amino acids. The polypeptide is Alanine racemase (alr) (Aromatoleum aromaticum (strain DSM 19018 / LMG 30748 / EbN1) (Azoarcus sp. (strain EbN1))).